Consider the following 262-residue polypeptide: Phosphonates import ATP-binding protein PhnC (262 aa).

Residues 5–253 (IRVEKLAKTF…RFDHLYRSIN (249 aa)) enclose the ABC transporter domain. Position 37-44 (37-44 (GPSGSGKS)) interacts with ATP.

The protein belongs to the ABC transporter superfamily. Phosphonates importer (TC 3.A.1.9.1) family. As to quaternary structure, the complex is composed of two ATP-binding proteins (PhnC), two transmembrane proteins (PhnE) and a solute-binding protein (PhnD).

The protein resides in the cell inner membrane. The enzyme catalyses phosphonate(out) + ATP + H2O = phosphonate(in) + ADP + phosphate + H(+). Part of the ABC transporter complex PhnCDE involved in phosphonates import. Responsible for energy coupling to the transport system. This chain is Phosphonates import ATP-binding protein PhnC, found in Shigella dysenteriae serotype 1 (strain Sd197).